The following is a 1742-amino-acid chain: Complement C4 (1742 aa).

The first 19 residues, 1–19 (MRLLWGLLWAFGLFASSLQ), serve as a signal peptide directing secretion. Asparagine 60 carries N-linked (GlcNAc...) asparagine glycosylation. Cysteine 68 and cysteine 97 are oxidised to a cystine. Asparagine 226 carries N-linked (GlcNAc...) asparagine glycosylation. A disulfide bridge connects residues cysteine 634 and cysteine 668. A propeptide spanning residues 675 to 678 (RKKR) is cleaved from the precursor. 3 disulfides stabilise this stretch: cysteine 701–cysteine 727, cysteine 702–cysteine 734, and cysteine 715–cysteine 735. One can recognise an Anaphylatoxin-like domain in the interval 701–735 (CCQDGLTRLPMVRSCEQRAARVLQPACREPFLSCC). An N-linked (GlcNAc...) asparagine glycan is attached at asparagine 861. The segment at residues 1007–1010 (CGEQ) is a cross-link (isoglutamyl cysteine thioester (Cys-Gln)). N-linked (GlcNAc...) asparagine glycans are attached at residues asparagine 1325 and asparagine 1388. 3 positions are modified to sulfotyrosine: tyrosine 1414, tyrosine 1418, and tyrosine 1420. Positions 1445–1451 (RRNRRRR) are excised as a propeptide. Cystine bridges form between cysteine 1469–cysteine 1533, cysteine 1581–cysteine 1586, cysteine 1593–cysteine 1671, cysteine 1616–cysteine 1740, and cysteine 1716–cysteine 1725. The NTR domain occupies 1593–1740 (CPRQRRALER…FIQEYSTLGC (148 aa)).

In absence of complement activation, circulates in blood as a disulfide-linked trimer of an alpha, beta and gamma chain. In terms of assembly, complement C4b is composed of complement C4b-A, complement C4 beta and complement C4 gamma chains that are associated via disulfide bonds. Non-enzymatic component of the C3 convertase, also named C4bC2b, composed of the serine protease complement C2b (C2), as well as complement C4b. Non-enzymatic component of the C5 convertase, also named C4bC2bC3b, composed of the serine protease complement C2b (C2), complement C3b, as well as complement C4b. Post-translationally, prior to secretion, the single-chain precursor is enzymatically cleaved by plasminogen (PLG) to yield non-identical chains alpha, beta and gamma. During activation of the complement systems, the alpha chain is cleaved into C4a and C4b by different proteases depending on the complement pathway: C4b stays linked to the beta and gamma chains, while C4a is released in the plasma. The alpha chain is cleaved by C1S to generate C4a and C4b following activation by the classical complement system. The alpha chain is cleaved to generate C4a and C4b by MASP2 following activation by the lectin complement system. The alpha chain is cleaved by GZMK to generate C4a and C4b following activation by the GZMK complement system. Further degradation of C4b by C1 into the inactive fragments C4c and C4d blocks the generation of C3 convertase. The proteolytic cleavages often are incomplete so that many structural forms can be found in plasma. In terms of processing, upon activation, the internal thioester bond reacts with carbohydrate antigens on the target surface to form amide or ester bonds, leading to covalent association with the surface of pathogens. Complement C4b interacts with complement C3b via a thioester linkage. Post-translationally, N- and O-glycosylated. O-glycosylated with a core 1 or possibly core 8 glycan.

The protein resides in the secreted. It localises to the cell surface. Its function is as follows. Precursor of non-enzymatic components of the classical, lectin and GZMK complement pathways, which consist in a cascade of proteins that leads to phagocytosis and breakdown of pathogens and signaling that strengthens the adaptive immune system. In terms of biological role, non-enzymatic component of C3 and C5 convertases. Generated following cleavage by complement proteases (C1S, MASP2 or GZMK, depending on the complement pathway), it covalently attaches to the surface of pathogens, where it acts as an opsonin that marks the surface of antigens for removal. It then recruits the serine protease complement C2b to form the C3 and C5 convertases, which cleave and activate C3 and C5, respectively, the next components of the complement pathways. Complement C4b-A isotype is responsible for effective binding to form amide bonds with immune aggregates or protein antigens, while complement C4b-B isotype catalyzes the transacylation of the thioester carbonyl group to form ester bonds with carbohydrate antigens. Putative humoral mediator released following cleavage by complement proteases (C1S, MASP2 or GZMK, depending on the complement pathway). While it is strongly similar to anaphylatoxins, its role is unclear. Was reported to act as a mediator of local inflammatory process; however these effects were probably due to contamination with C3a and/C5a anaphylatoxins in biological assays. The protein is Complement C4 of Cavia porcellus (Guinea pig).